A 74-amino-acid polypeptide reads, in one-letter code: Kappa-scoloptoxin(07)-Ssm2c (74 aa).

Positions 1–19 (MLVFYAPLFVSIFSNTVMG) are cleaved as a signal peptide. The propeptide occupies 20-41 (ATIDKPIPKPILREAIEKIAVN).

It belongs to the scoloptoxin-07 family. Post-translationally, contains 3 disulfide bonds. Expressed by the venom gland.

The protein resides in the secreted. Functionally, inhibits voltage-gated potassium channels. The protein is Kappa-scoloptoxin(07)-Ssm2c of Scolopendra mutilans (Chinese red-headed centipede).